A 416-amino-acid polypeptide reads, in one-letter code: D-amino acid dehydrogenase (416 aa).

Ile3 to Tyr17 serves as a coordination point for FAD.

This sequence belongs to the DadA oxidoreductase family. The cofactor is FAD.

The enzyme catalyses a D-alpha-amino acid + A + H2O = a 2-oxocarboxylate + AH2 + NH4(+). It functions in the pathway amino-acid degradation; D-alanine degradation; NH(3) and pyruvate from D-alanine: step 1/1. Oxidative deamination of D-amino acids. The polypeptide is D-amino acid dehydrogenase (Brucella anthropi (strain ATCC 49188 / DSM 6882 / CCUG 24695 / JCM 21032 / LMG 3331 / NBRC 15819 / NCTC 12168 / Alc 37) (Ochrobactrum anthropi)).